The primary structure comprises 390 residues: MTTLSPKDVVIVDGVRTAMGKSKNGMFRNVRADSMSAELVRALVKRNDFDTNEVEDIIWGCVNQTLEQGMNIGRNIGLLADIPKTAGGQTVNRLCGSSMQALHTAAAQIMTNQGDVFIIGGVEHMGHVGMMHGIDINPEASKHYAKASNMMGLTAEMLGRMNGITREQQDEFGYESHRRAWAATQAGRFDNEIIGIEGHDAEGRLQLCTVDEVIRPDTSMESLAKLRPVFDPANGTVTAATSSALSDGASAMLVMSAQKAKDLGLKPRARIRSMAIAGCDAAIMGYGPVPATQKALKRAGLTVEDMQTIELNEAFAAQGLSVLKALNLLDKRDIINVNGGAIALGHPLGCSGARITVTLLNAMEQMDTEIGLATMCIGLGQGISTVIERV.

Cys95 acts as the Acyl-thioester intermediate in catalysis. Catalysis depends on proton acceptor residues His346 and Cys376.

This sequence belongs to the thiolase-like superfamily. Thiolase family. As to quaternary structure, heterotetramer of two alpha chains (FadB) and two beta chains (FadA).

The protein localises to the cytoplasm. It catalyses the reaction an acyl-CoA + acetyl-CoA = a 3-oxoacyl-CoA + CoA. It functions in the pathway lipid metabolism; fatty acid beta-oxidation. Functionally, catalyzes the final step of fatty acid oxidation in which acetyl-CoA is released and the CoA ester of a fatty acid two carbons shorter is formed. This is 3-ketoacyl-CoA thiolase from Psychrobacter sp. (strain PRwf-1).